A 34-amino-acid polypeptide reads, in one-letter code: Photosystem II reaction center protein M (34 aa).

The helical transmembrane segment at 5-25 threads the bilayer; sequence ILAFIATALFILIPTAFLLIL.

It belongs to the PsbM family. In terms of assembly, PSII is composed of 1 copy each of membrane proteins PsbA, PsbB, PsbC, PsbD, PsbE, PsbF, PsbH, PsbI, PsbJ, PsbK, PsbL, PsbM, PsbT, PsbX, PsbY, PsbZ, Psb30/Ycf12, at least 3 peripheral proteins of the oxygen-evolving complex and a large number of cofactors. It forms dimeric complexes.

Its subcellular location is the plastid. It localises to the chloroplast thylakoid membrane. One of the components of the core complex of photosystem II (PSII). PSII is a light-driven water:plastoquinone oxidoreductase that uses light energy to abstract electrons from H(2)O, generating O(2) and a proton gradient subsequently used for ATP formation. It consists of a core antenna complex that captures photons, and an electron transfer chain that converts photonic excitation into a charge separation. This subunit is found at the monomer-monomer interface. The chain is Photosystem II reaction center protein M from Anthoceros angustus (Hornwort).